A 62-amino-acid chain; its full sequence is uncharacterized protein (62 aa).

The disordered stretch occupies residues 1–26 (MGELAASANHGHSPCYPERKGTPGDL). Residues 17–26 (PERKGTPGDL) are compositionally biased toward basic and acidic residues.

This is an uncharacterized protein from Homo sapiens (Human).